Reading from the N-terminus, the 61-residue chain is Small ribosomal subunit protein uS14B (61 aa).

Residues C24, C27, C40, and C43 each coordinate Zn(2+).

It belongs to the universal ribosomal protein uS14 family. Zinc-binding uS14 subfamily. As to quaternary structure, part of the 30S ribosomal subunit. Contacts proteins S3 and S10. Requires Zn(2+) as cofactor.

Its function is as follows. Binds 16S rRNA, required for the assembly of 30S particles and may also be responsible for determining the conformation of the 16S rRNA at the A site. This chain is Small ribosomal subunit protein uS14B, found in Mycobacterium ulcerans (strain Agy99).